The following is a 656-amino-acid chain: MATTTVVCGGGGDVEGCDGERSLDLLPAALLETIMTKLDVASLCSLASTCKTLKSCVTRVLTFTPNFHIFNVSLSMETVRPLLFPNQQLSSLKLDCGRLGNSAIDILVRPSLREISLHNCRDFSGDLISEIGRKCKDLRLLCLGSVAEKVGRSISRCALEDLLNGCSHLEVLALMFDLSLYLRPGDGRIFGLVSDRLTHLELGHITSRMMTQLLTSTEISGQDSNRVTTSTVLQNVQRLRLSVDCITDAVVKAISKSLPSLIDLDIRDAPLEDPRQVSDLTDFGLHEINQNGKLKHLSLIRSQEFHPTYFRRVSDQGMLFLADKCLGMETICLGGFCRVTDAGFKTILHSCASLSKFSIYHGPKLTDLVFHDILATTLSLSHVSLRRCHLLTDHAIQKLASSLKLENLDLRGCRNLRDETLTAVSHLPKLKVLLLDGADISDTGLSYLKEGVLDSLVSLSVRGCRNLTDKFMSTLFDGSSKLALRELDLSNLPNLTDAAIFALAKSGAPITKLQLRECRLIGDASVMALASTRVYEDECPGSSLCLLDLYDCGGITQLSFKWLKKPFFPRLKWLGITGSVNRDIVDALARRRPHLQVSCRGEELGNDGEDDWDSADIHQHIEAQEDELEQWILGDEGDVEMEDAEDESEEDASEED.

In terms of domain architecture, F-box spans 20–66 (ERSLDLLPAALLETIMTKLDVASLCSLASTCKTLKSCVTRVLTFTPN). 16 LRR repeats span residues 71–96 (NVSLSMETVRPLLFPNQQLSSLKLDC), 120–145 (CRDFSGDLISEIGRKCKDLRLLCLGS), 151–176 (GRSISRCALEDLLNGCSHLEVLALMF), 194–221 (SDRLTHLELGHITSRMMTQLLTSTEISG), 243–268 (VDCITDAVVKAISKSLPSLIDLDIRD), 277–301 (VSDLTDFGLHEINQNGKLKHLSLIR), 310–335 (FRRVSDQGMLFLADKCLGMETICLGG), 336–361 (FCRVTDAGFKTILHSCASLSKFSIYH), 362–387 (GPKLTDLVFHDILATTLSLSHVSLRR), 388–412 (CHLLTDHAIQKLASSLKLENLDLRG), 413–437 (CRNLRDETLTAVSHLPKLKVLLLDG), 439–463 (DISDTGLSYLKEGVLDSLVSLSVRG), 464–491 (CRNLTDKFMSTLFDGSSKLALRELDLSN), 492–517 (LPNLTDAAIFALAKSGAPITKLQLRE), 518–551 (CRLIGDASVMALASTRVYEDECPGSSLCLLDLYD), and 552–578 (CGGITQLSFKWLKKPFFPRLKWLGITG). Residues 632 to 656 (ILGDEGDVEMEDAEDESEEDASEED) form a disordered region.

In Arabidopsis thaliana (Mouse-ear cress), this protein is F-box/LRR-repeat protein 10 (FBL10).